The following is a 229-amino-acid chain: Aquaporin Z (229 aa).

2 consecutive transmembrane segments (helical) span residues 8 to 28 (FLGT…AAGF) and 33 to 53 (IGFA…AYAI). The NPA 1 signature appears at 62 to 64 (NPA). Helical transmembrane passes span 88–108 (VLGA…GAGF), 129–149 (LLAA…VIMG), and 158–178 (GFAP…SIPV). The NPA 2 motif lies at 184–186 (NPA). Residues 192–212 (ALFVGGWAVQQLWLFWLAPII) form a helical membrane-spanning segment.

It belongs to the MIP/aquaporin (TC 1.A.8) family. As to quaternary structure, homotetramer.

It is found in the cell inner membrane. It catalyses the reaction H2O(in) = H2O(out). Channel that permits osmotically driven movement of water in both directions. It is involved in the osmoregulation and in the maintenance of cell turgor during volume expansion in rapidly growing cells. It mediates rapid entry or exit of water in response to abrupt changes in osmolarity. In Chromobacterium violaceum (strain ATCC 12472 / DSM 30191 / JCM 1249 / CCUG 213 / NBRC 12614 / NCIMB 9131 / NCTC 9757 / MK), this protein is Aquaporin Z.